Reading from the N-terminus, the 183-residue chain is Ran guanine nucleotide release factor (183 aa).

Residues 23 to 66 (ELRQIPDNQEVFAHSQTDQSIIIELLEYQSQVQDADAARYHFED) form an interaction with RAN region.

Belongs to the MOG1 family. As to quaternary structure, monomer. Interacts with ran.

The protein resides in the nucleus. Its subcellular location is the cytoplasm. The protein localises to the perinuclear region. It localises to the cell membrane. Functionally, may regulate the intracellular trafficking of RAN. Promotes guanine nucleotide release from RAN and inhibits binding of new GTP. Plays a role in the regulation of the levels of GTP-bound RAN in the nucleus. Required for normal expression of the ion channel hcn4 and for normal expression of the cardiac transcription factors nkx2.5, gata4 and hand2 during embryonic development. Required for normal embryonic heart development and normal heart rate. This is Ran guanine nucleotide release factor from Danio rerio (Zebrafish).